Reading from the N-terminus, the 156-residue chain is Cyanate hydratase (156 aa).

Catalysis depends on residues Arg96, Glu99, and Ser122.

It belongs to the cyanase family.

It catalyses the reaction cyanate + hydrogencarbonate + 3 H(+) = NH4(+) + 2 CO2. Catalyzes the reaction of cyanate with bicarbonate to produce ammonia and carbon dioxide. This chain is Cyanate hydratase, found in Burkholderia cenocepacia (strain ATCC BAA-245 / DSM 16553 / LMG 16656 / NCTC 13227 / J2315 / CF5610) (Burkholderia cepacia (strain J2315)).